Here is a 185-residue protein sequence, read N- to C-terminus: Ribosome-recycling factor (185 aa).

It belongs to the RRF family.

It localises to the cytoplasm. In terms of biological role, responsible for the release of ribosomes from messenger RNA at the termination of protein biosynthesis. May increase the efficiency of translation by recycling ribosomes from one round of translation to another. The polypeptide is Ribosome-recycling factor (Neisseria meningitidis serogroup A / serotype 4A (strain DSM 15465 / Z2491)).